A 334-amino-acid chain; its full sequence is Ketol-acid reductoisomerase (NADP(+)) (334 aa).

The region spanning 2–182 (PKMYYEKDTD…GGARAGVLET (181 aa)) is the KARI N-terminal Rossmann domain. Residues 25-28 (YGSQ), Ser51, Ser53, and 83-86 (DEKQ) each bind NADP(+). His108 is an active-site residue. An NADP(+)-binding site is contributed by Gly134. In terms of domain architecture, KARI C-terminal knotted spans 183–328 (TFKDETETDL…KELRGMMSWI (146 aa)). Residues Asp191, Glu195, Glu227, and Glu231 each contribute to the Mg(2+) site. A substrate-binding site is contributed by Ser252.

This sequence belongs to the ketol-acid reductoisomerase family. It depends on Mg(2+) as a cofactor.

It carries out the reaction (2R)-2,3-dihydroxy-3-methylbutanoate + NADP(+) = (2S)-2-acetolactate + NADPH + H(+). The catalysed reaction is (2R,3R)-2,3-dihydroxy-3-methylpentanoate + NADP(+) = (S)-2-ethyl-2-hydroxy-3-oxobutanoate + NADPH + H(+). Its pathway is amino-acid biosynthesis; L-isoleucine biosynthesis; L-isoleucine from 2-oxobutanoate: step 2/4. The protein operates within amino-acid biosynthesis; L-valine biosynthesis; L-valine from pyruvate: step 2/4. In terms of biological role, involved in the biosynthesis of branched-chain amino acids (BCAA). Catalyzes an alkyl-migration followed by a ketol-acid reduction of (S)-2-acetolactate (S2AL) to yield (R)-2,3-dihydroxy-isovalerate. In the isomerase reaction, S2AL is rearranged via a Mg-dependent methyl migration to produce 3-hydroxy-3-methyl-2-ketobutyrate (HMKB). In the reductase reaction, this 2-ketoacid undergoes a metal-dependent reduction by NADPH to yield (R)-2,3-dihydroxy-isovalerate. The sequence is that of Ketol-acid reductoisomerase (NADP(+)) from Clostridium beijerinckii (strain ATCC 51743 / NCIMB 8052) (Clostridium acetobutylicum).